The sequence spans 284 residues: Small ribosomal subunit protein uS2 (284 aa).

Residues 250–272 (QELLAGATASPTAAGAAPGTPEA) are compositionally biased toward low complexity. The segment at 250–284 (QELLAGATASPTAAGAAPGTPEADIQTEPTAPQNP) is disordered.

Belongs to the universal ribosomal protein uS2 family.

In Mycobacterium sp. (strain KMS), this protein is Small ribosomal subunit protein uS2.